Here is an 862-residue protein sequence, read N- to C-terminus: Taxadiene synthase (862 aa).

A disordered region spans residues 45–66 (RVKMSRGSGGPGPVVMMSSSTG). The Mg(2+) site is built by aspartate 613, aspartate 617, asparagine 757, threonine 761, and glutamate 765. The DDXXD motif motif lies at 613–617 (DDMAD).

Belongs to the terpene synthase family. The cofactor is Mg(2+).

The enzyme catalyses (2E,6E,10E)-geranylgeranyl diphosphate = taxa-4(5),11(12)-diene + diphosphate. It participates in alkaloid biosynthesis; taxol biosynthesis; taxa-4(20),11-dien-5alpha-ol from geranylgeranyl diphosphate: step 1/2. Functionally, catalyzes the cyclization of the ubiquitous isoprenoid intermediate geranylgeranyl diphosphate to taxa-4,11-diene, the parent olefin with a taxane skeleton. This chain is Taxadiene synthase (TDC1), found in Taxus chinensis (Chinese yew).